The chain runs to 375 residues: Protein RecA (375 aa).

75-82 (GPESSGKT) contacts ATP. A disordered region spans residues 339–375 (GPYAKMKDEQTEEAAGDQMDEDKPIDLSPNFDDDDAN). The span at 348-358 (QTEEAAGDQMD) shows a compositional bias: acidic residues.

This sequence belongs to the RecA family.

The protein resides in the cytoplasm. In terms of biological role, can catalyze the hydrolysis of ATP in the presence of single-stranded DNA, the ATP-dependent uptake of single-stranded DNA by duplex DNA, and the ATP-dependent hybridization of homologous single-stranded DNAs. It interacts with LexA causing its activation and leading to its autocatalytic cleavage. This is Protein RecA from Corynebacterium jeikeium (strain K411).